The sequence spans 179 residues: Large ribosomal subunit protein uL6 (179 aa).

The protein belongs to the universal ribosomal protein uL6 family. As to quaternary structure, part of the 50S ribosomal subunit.

In terms of biological role, this protein binds to the 23S rRNA, and is important in its secondary structure. It is located near the subunit interface in the base of the L7/L12 stalk, and near the tRNA binding site of the peptidyltransferase center. This Mycoplasmopsis pulmonis (strain UAB CTIP) (Mycoplasma pulmonis) protein is Large ribosomal subunit protein uL6.